A 440-amino-acid chain; its full sequence is NADH-quinone oxidoreductase subunit H (440 aa).

A run of 9 helical transmembrane segments spans residues 11–31, 83–103, 123–143, 164–184, 207–227, 261–281, 299–319, 331–351, and 366–386; these read VWLI…WTIF, IVFN…WSVI, VPVA…GVVL, MISY…FSGS, IAGH…ITMF, FLAE…LFLG, WWGL…FVWV, FMDL…LLVA, and VFLV…FMGG.

This sequence belongs to the complex I subunit 1 family. In terms of assembly, NDH-1 is composed of 14 different subunits. Subunits NuoA, H, J, K, L, M, N constitute the membrane sector of the complex.

The protein resides in the cell membrane. The catalysed reaction is a quinone + NADH + 5 H(+)(in) = a quinol + NAD(+) + 4 H(+)(out). NDH-1 shuttles electrons from NADH, via FMN and iron-sulfur (Fe-S) centers, to quinones in the respiratory chain. The immediate electron acceptor for the enzyme in this species is believed to be ubiquinone. Couples the redox reaction to proton translocation (for every two electrons transferred, four hydrogen ions are translocated across the cytoplasmic membrane), and thus conserves the redox energy in a proton gradient. This subunit may bind ubiquinone. The sequence is that of NADH-quinone oxidoreductase subunit H from Cutibacterium acnes (strain DSM 16379 / KPA171202) (Propionibacterium acnes).